The following is a 187-amino-acid chain: Structural protein ORF187 (187 aa).

Residues 65–85 (IYQPTAIAVSGVGGIIGALLA) traverse the membrane as a helical segment.

It is found in the host membrane. The protein resides in the virion. The protein is Structural protein ORF187 of Acidianus two-tailed virus (ATV).